The sequence spans 257 residues: Protein YIPF5 (257 aa).

Residues 1 to 124 are Cytoplasmic-facing; that stretch reads MSGFENLNTD…KVADGSIMNE (124 aa). The interaction with Sec23 stretch occupies residues 75-106; sequence PASPQPFYGNSFEDEPPLLEELGINFDHIWQK. The chain crosses the membrane as a helical span at residues 125 to 145; it reads TDLAGPMVFCLAFGATLLLAG. A topological domain (lumenal) is located at residue lysine 146. A helical membrane pass occupies residues 147-167; it reads IQFGYVYGISAIGCLGMFCLL. Topologically, residues 168–173 are cytoplasmic; sequence NLMSMT. The helical transmembrane segment at 174–194 threads the bilayer; the sequence is GVSFGCVASVLGYCLLPMILL. At 195–196 the chain is on the lumenal side; that stretch reads SS. A helical membrane pass occupies residues 197 to 217; the sequence is FAVIFSLQGMVGIILTAGIIG. The Cytoplasmic segment spans residues 218-236; sequence WCSFSASKIFISALAMEGQ. The helical transmembrane segment at 237 to 257 threads the bilayer; sequence QLLVAYPCALLYGVFALISVF.

The protein belongs to the YIP1 family. In terms of assembly, interacts with the COPII coat components Sec23 (SEC23A and/or SEC23B) and Sec24 (SEC24A and/or SEC24B). Interacts with YIF1A. May interact with RAB1A. Interacts with YIPF3 and YIPF4.

Its subcellular location is the endoplasmic reticulum membrane. It is found in the golgi apparatus. The protein resides in the cis-Golgi network membrane. It localises to the cytoplasmic vesicle. The protein localises to the COPII-coated vesicle. Its function is as follows. Plays a role in transport between endoplasmic reticulum and Golgi. In pancreatic beta cells, required to transport proinsulin from endoplasmic reticulum into the Golgi. This Macaca fascicularis (Crab-eating macaque) protein is Protein YIPF5 (YIPF5).